The sequence spans 51 residues: Sperm protamine P1 (51 aa).

2 cysteine pairs are disulfide-bonded: Cys-7–Cys-15 and Cys-38–Cys-48.

This sequence belongs to the protamine P1 family. In terms of assembly, cross-linked by interchain disulfide bonds around the DNA-helix. Phosphorylated by SRPK1. In terms of tissue distribution, testis.

It localises to the nucleus. The protein localises to the chromosome. In terms of biological role, protamines substitute for histones in the chromatin of sperm during the haploid phase of spermatogenesis. They compact sperm DNA into a highly condensed, stable and inactive complex. In Mus musculus (Mouse), this protein is Sperm protamine P1 (Prm1).